Here is a 400-residue protein sequence, read N- to C-terminus: CRAL-TRIO domain-containing protein C34C12.6 (400 aa).

The CRAL-TRIO domain maps to 87–270; it reads ELPSIAPFLQ…EYGGEFVNTV (184 aa). Residues 304–399 form the GOLD domain; the sequence is PKSSHKDVSP…TLKLEYTVAI (96 aa).

The polypeptide is CRAL-TRIO domain-containing protein C34C12.6 (Caenorhabditis elegans).